A 255-amino-acid polypeptide reads, in one-letter code: Venom allergen-1 (255 aa).

Positions 1-21 are cleaved as a signal peptide; it reads MASHVIVKFITAAILIGSCYA. The SCP domain maps to 65 to 210; sequence LKKHNELRAE…VIKYYLVCNY (146 aa). N-linked (GlcNAc...) asparagine glycosylation is found at asparagine 146 and asparagine 209.

It belongs to the CRISP family. As to quaternary structure, interacts with human LRPPRC; the interaction interrupts association between BECN1 and LRPPRC. Interacts with human CD4. In terms of assembly, (Microbial infection) Interacts with Zika virus envelope protein E and Zika virus-like particles; the interaction does not affect Zika virus replication in human endothelial cells and keratinocytes. In terms of tissue distribution, saliva (at protein level). Female salivary gland. No or low-level expression in female hemolymph, midgut, Malpighian tubule system and ovary. No or low-level expression in male tissues.

The protein resides in the secreted. The protein localises to the host endosome. It localises to the host mitochondrion. Its function is as follows. Activates autophagy in human monocytic cells, dendritic cells and macrophages. Promotes activation of human CD4(+) T-cells. Does not affect cytokine expression in human monocytic cells. Functionally, (Microbial infection) Promotes dengue virus type 2 replication in human monocytic cells, dendritic cells and macrophages. Pro-viral properties are linked to BECN1-mediated autophagy activation in the host. Does not directly interact with the purified envelope protein of dengue virus type 2. In terms of biological role, (Microbial infection) Promotes Zika virus replication in human monocytic cells, dendritic cells and macrophages. Facilitates Zika virus transmission from infected mosquitoes to the host in mouse model. Pro-viral properties are linked to BECN1-mediated autophagy activation in the host. Does not affect Zika virus replication in human endothelial cells and keratinocytes. (Microbial infection) Promotes Semliki Forest virus replication in human monocytic cells. Its function is as follows. (Microbial infection) Does not influence Batai virus replication in human monocytic cells. The protein is Venom allergen-1 of Aedes aegypti (Yellowfever mosquito).